The following is a 162-amino-acid chain: Caveolin-2 (162 aa).

At Met-1–Arg-86 the chain is on the cytoplasmic side. The helical intramembrane region spans Leu-87–Leu-107. Topologically, residues Ser-108–Thr-162 are cytoplasmic.

Belongs to the caveolin family. As to quaternary structure, homooligomer.

The protein localises to the golgi apparatus membrane. Its subcellular location is the cell membrane. It is found in the membrane. It localises to the caveola. In terms of biological role, may act as a scaffolding protein within caveolar membranes. Interacts directly with G-protein alpha subunits and can functionally regulate their activity. The chain is Caveolin-2 (cav2) from Takifugu rubripes (Japanese pufferfish).